Reading from the N-terminus, the 276-residue chain is Eukaryotic translation initiation factor 3 subunit G (276 aa).

Phosphoserine is present on Ser148. One can recognise an RRM domain in the interval 195-274; sequence TTLKISQLNS…LILHLEWSKK (80 aa).

Belongs to the eIF-3 subunit G family. As to quaternary structure, component of the eukaryotic translation initiation factor 3 (eIF-3) complex.

The protein localises to the cytoplasm. RNA-binding component of the eukaryotic translation initiation factor 3 (eIF-3) complex, which is involved in protein synthesis of a specialized repertoire of mRNAs and, together with other initiation factors, stimulates binding of mRNA and methionyl-tRNAi to the 40S ribosome. The eIF-3 complex specifically targets and initiates translation of a subset of mRNAs involved in cell proliferation. This subunit can bind 18S rRNA. In Debaryomyces hansenii (strain ATCC 36239 / CBS 767 / BCRC 21394 / JCM 1990 / NBRC 0083 / IGC 2968) (Yeast), this protein is Eukaryotic translation initiation factor 3 subunit G.